Consider the following 144-residue polypeptide: Large ribosomal subunit protein uL13 (144 aa).

It belongs to the universal ribosomal protein uL13 family. In terms of assembly, part of the 50S ribosomal subunit.

Functionally, this protein is one of the early assembly proteins of the 50S ribosomal subunit, although it is not seen to bind rRNA by itself. It is important during the early stages of 50S assembly. In Lawsonia intracellularis (strain PHE/MN1-00), this protein is Large ribosomal subunit protein uL13.